The following is a 477-amino-acid chain: Putative BTB/POZ domain-containing protein R830 (477 aa).

One can recognise a BTB domain in the interval 13 to 83 (SDLELILVDK…FYGIETNNDP (71 aa)).

The protein belongs to the mimivirus BTB/WD family.

The protein is Putative BTB/POZ domain-containing protein R830 of Acanthamoeba polyphaga mimivirus (APMV).